The primary structure comprises 639 residues: Protein sly1 homolog (639 aa).

4 repeat units span residues D85–A121, R203–Q245, L423–K460, and Q464–T500. Residues D85–T500 form a 4 X approximate repeats region.

This sequence belongs to the STXBP/unc-18/SEC1 family. In embryos, from stage 14, expression is seen in posterior midgut, esophagus and salivary glands. No expression is seen in larval imaginal disks.

Its subcellular location is the cytoplasm. It localises to the membrane. Non-vital for development. The chain is Protein sly1 homolog (Slh) from Drosophila melanogaster (Fruit fly).